A 402-amino-acid chain; its full sequence is GPI mannosyltransferase 1 (402 aa).

10 helical membrane-spanning segments follow: residues 5–25 (VILLLTVSLLLRIGFFSYGIF), 79–99 (WIHMGKVFFVLFDLITGVMII), 108–128 (LTKQLILASIWLLNPIVITIS), 162–182 (LSIHFKIYPIIYALPIGIYLL), 191–211 (IWRLFMIGISTLIGITAPTYF), 238–258 (FSIWNLVLLLESAGIHLSQSI), 260–280 (LSKLAFVPQLTLCAVLPYLLW), 309–329 (QYFIWYLVLSPFYFANTTITW), 333–353 (VVCIFLWILSQAVWLSQAYLL), and 365–385 (LFFGNIVFFLINVYLLGVFIT).

It belongs to the PIGM family.

The protein resides in the endoplasmic reticulum membrane. Its pathway is glycolipid biosynthesis; glycosylphosphatidylinositol-anchor biosynthesis. Functionally, mannosyltransferase involved in glycosylphosphatidylinositol-anchor biosynthesis. Transfers the first alpha-1,4-mannose to GlcN-acyl-PI during GPI precursor assembly. Required for cell wall integrity. This is GPI mannosyltransferase 1 (GPI14) from Kluyveromyces lactis (strain ATCC 8585 / CBS 2359 / DSM 70799 / NBRC 1267 / NRRL Y-1140 / WM37) (Yeast).